We begin with the raw amino-acid sequence, 179 residues long: Nuclear transcription factor Y subunit B (179 aa).

Residues 1–32 (MAEAPASPGGGGGSHESGSPRGGGGGGSVREQ) are disordered. Over residues 8–28 (PGGGGGSHESGSPRGGGGGGS) the composition is skewed to gly residues. The DNA-binding element occupies 36–42 (LPIANIS). The interval 63–74 (VQECVSEFISFI) is subunit association domain (SAD). Residues 147-179 (SSSAAEGMGQQGAYNQGMGYMQPQYHNGDISNV) form a disordered region.

The protein belongs to the NFYB/HAP3 subunit family. In terms of assembly, heterotrimeric transcription factor composed of three components, NF-YA, NF-YB and NF-YC. NF-YB and NF-YC must interact and dimerize for NF-YA association and DNA binding.

It is found in the nucleus. In terms of biological role, component of the NF-Y/HAP transcription factor complex. The NF-Y complex stimulates the transcription of various genes by recognizing and binding to a CCAAT motif in promoters. The sequence is that of Nuclear transcription factor Y subunit B (NFY2) from Zea mays (Maize).